The following is a 133-amino-acid chain: Ribosome-binding factor A (133 aa).

Belongs to the RbfA family. In terms of assembly, monomer. Binds 30S ribosomal subunits, but not 50S ribosomal subunits or 70S ribosomes.

The protein resides in the cytoplasm. Its function is as follows. One of several proteins that assist in the late maturation steps of the functional core of the 30S ribosomal subunit. Associates with free 30S ribosomal subunits (but not with 30S subunits that are part of 70S ribosomes or polysomes). Required for efficient processing of 16S rRNA. May interact with the 5'-terminal helix region of 16S rRNA. This is Ribosome-binding factor A from Proteus mirabilis (strain HI4320).